A 257-amino-acid polypeptide reads, in one-letter code: Snake venom serine protease KN1 (257 aa).

The signal sequence occupies residues 1–18; that stretch reads MVLIRVLANLLILQLSYA. The propeptide occupies 19 to 24; sequence QKSSEL. Residues 25 to 248 form the Peptidase S1 domain; sequence VVGGHPCNIN…HLDWIKSIIA (224 aa). 5 disulfides stabilise this stretch: Cys-31/Cys-162, Cys-49/Cys-65, Cys-141/Cys-209, Cys-173/Cys-188, and Cys-199/Cys-224. The Charge relay system role is filled by His-64. N-linked (GlcNAc...) asparagine glycosylation is present at Asn-102. The active-site Charge relay system is the Asp-109. N-linked (GlcNAc...) asparagine glycans are attached at residues Asn-120 and Asn-121. The active-site Charge relay system is the Ser-203.

This sequence belongs to the peptidase S1 family. Snake venom subfamily. Monomer. As to expression, expressed by the venom gland.

Its subcellular location is the secreted. In terms of biological role, snake venom serine protease that may act in the hemostasis system of the prey. The sequence is that of Snake venom serine protease KN1 from Trimeresurus stejnegeri (Chinese green tree viper).